Here is a 97-residue protein sequence, read N- to C-terminus: Conotoxin Cal6.1b (97 aa).

The first 22 residues, 1–22, serve as a signal peptide directing secretion; the sequence is MKLTTVLVVALLVLAACQFTVT. Residues 22-46 are disordered; sequence TDNSGDDPENPSLRSAGENQNPDST. Positions 23-68 are excised as a propeptide; that stretch reads DNSGDDPENPSLRSAGENQNPDSTKTITAWATRDMTNMRRGLNRPS. 3 disulfide bridges follow: C71-C87, C78-C91, and C86-C96.

The protein belongs to the conotoxin O1 superfamily. Expressed by the venom duct.

Its subcellular location is the secreted. Probable neurotoxin with unknown target. Possibly targets ion channels. This is Conotoxin Cal6.1b from Californiconus californicus (California cone).